A 249-amino-acid polypeptide reads, in one-letter code: Deoxyribose-phosphate aldolase (249 aa).

D109 (proton donor/acceptor) is an active-site residue. K171 serves as the catalytic Schiff-base intermediate with acetaldehyde. The active-site Proton donor/acceptor is the K200.

The protein belongs to the DeoC/FbaB aldolase family. DeoC type 1 subfamily.

Its subcellular location is the cytoplasm. The catalysed reaction is 2-deoxy-D-ribose 5-phosphate = D-glyceraldehyde 3-phosphate + acetaldehyde. It participates in carbohydrate degradation; 2-deoxy-D-ribose 1-phosphate degradation; D-glyceraldehyde 3-phosphate and acetaldehyde from 2-deoxy-alpha-D-ribose 1-phosphate: step 2/2. In terms of biological role, catalyzes a reversible aldol reaction between acetaldehyde and D-glyceraldehyde 3-phosphate to generate 2-deoxy-D-ribose 5-phosphate. The sequence is that of Deoxyribose-phosphate aldolase from Klebsiella pneumoniae subsp. pneumoniae (strain ATCC 700721 / MGH 78578).